A 172-amino-acid polypeptide reads, in one-letter code: Probable calcium-binding protein CML28 (172 aa).

EF-hand domains are found at residues 1–36 (MDST…FGIF), 37–72 (IPDD…ILGD), 95–130 (DEDE…LGLK), and 133–168 (RTAD…GGFA). Residues Asp14, Asn16, Asp18, Arg20, Glu25, Asp50, Asn52, Asp54, Cys56, Glu61, Asp108, Asn110, Asp112, Glu119, Asp146, Asp148, Asp150, Arg152, and Glu157 each coordinate Ca(2+).

Its function is as follows. Potential calcium sensor. In Oryza sativa subsp. japonica (Rice), this protein is Probable calcium-binding protein CML28 (CML28).